We begin with the raw amino-acid sequence, 154 residues long: Small ribosomal subunit protein bS6 (154 aa).

Residues 94–154 (VKQEGPLPTP…SSQGKESQKS (61 aa)) are disordered. Positions 103-112 (PRSSNKGYNQ) are enriched in polar residues. The segment covering 113 to 139 (SEKKDIESIDSTNKSEFKEEANDKKTA) has biased composition (basic and acidic residues). Positions 140–154 (TSESTSSQGKESQKS) are enriched in polar residues.

It belongs to the bacterial ribosomal protein bS6 family.

In terms of biological role, binds together with bS18 to 16S ribosomal RNA. This Prochlorococcus marinus subsp. pastoris (strain CCMP1986 / NIES-2087 / MED4) protein is Small ribosomal subunit protein bS6.